A 1155-amino-acid polypeptide reads, in one-letter code: DNA-directed RNA polymerase subunit beta (1155 aa).

This sequence belongs to the RNA polymerase beta chain family. The RNAP catalytic core consists of 2 alpha, 1 beta, 1 beta' and 1 omega subunit. When a sigma factor is associated with the core the holoenzyme is formed, which can initiate transcription.

It catalyses the reaction RNA(n) + a ribonucleoside 5'-triphosphate = RNA(n+1) + diphosphate. Functionally, DNA-dependent RNA polymerase catalyzes the transcription of DNA into RNA using the four ribonucleoside triphosphates as substrates. This is DNA-directed RNA polymerase subunit beta from Borreliella afzelii (strain PKo) (Borrelia afzelii).